Here is a 351-residue protein sequence, read N- to C-terminus: Cyclic AMP-dependent transcription factor ATF-4 (351 aa).

Residue lysine 53 forms a Glycyl lysine isopeptide (Lys-Gly) (interchain with G-Cter in SUMO2) linkage. The interval 210–268 (EEDTPSDNDSGICMSPESYLGSPQHSPSTRGSPNRSLPSPGVLCGSARPKPYDPPGEKM) is disordered. Threonine 213 carries the phosphothreonine modification. Serine 215 carries the phosphoserine; by CK2 modification. Residues 215–224 (SDNDSGICMS) carry the BetaTrCP degron motif motif. Phosphoserine occurs at positions 219, 224, 231, and 235. A compositionally biased stretch (polar residues) spans 230 to 246 (GSPQHSPSTRGSPNRSL). Proline 236 carries the post-translational modification 4-hydroxyproline. Serine 245 carries the phosphoserine; by RPS6KA3 modification. Serine 248 carries the post-translational modification Phosphoserine. Glycyl lysine isopeptide (Lys-Gly) (interchain with G-Cter in SUMO2) cross-links involve residues lysine 259, lysine 267, and lysine 272. Residues 278–341 (LDKKLKKMEQ…QYLKDLIEEV (64 aa)) enclose the bZIP domain. The interval 280–300 (KKLKKMEQNKTAATRYRQKKR) is basic motif. Residues 280–340 (KKLKKMEQNK…IQYLKDLIEE (61 aa)) adopt a coiled-coil conformation. The tract at residues 305–341 (ALTGECKELEKKNEALKERADSLAKEIQYLKDLIEEV) is interaction with GABBR1. The segment at 306–334 (LTGECKELEKKNEALKERADSLAKEIQYL) is leucine-zipper. At lysine 311 the chain carries N6-acetyllysine.

The protein belongs to the bZIP family. Binds DNA as a homodimer and as a heterodimer. Heterodimer; heterodimerizes with CEBPB. Heterodimer; heterodimerizes with DDIT3/CHOP. Interacts with CEP290 (via an N-terminal region). Interacts with NEK6, DAPK2 (isoform 2) and ZIPK/DAPK3. Interacts (via its leucine zipper domain) with GABBR1 and GABBR2 (via their C-termini). Forms a heterodimer with TXLNG in osteoblasts. Interacts (via its DNA binding domain) with FOXO1 (C-terminal half); the interaction occurs in osteoblasts and regulates glucose homeostasis through suppression of beta-cell proliferation and a decrease in insulin production. Interacts with SATB2; the interaction results in enhanced DNA binding and transactivation by these transcription factors. Interacts with ABRAXAS2. Interacts with TRIB3, inhibiting the transactivation activity of ATF4. Interacts with DISC1; which inhibits ATF4 transcription factor activity by disrupting ATF4 dimerization and DNA-binding. Interacts with EP300/p300; EP300/p300 stabilizes ATF4 and increases its transcriptional activity independently of its catalytic activity by preventing its ubiquitination. In terms of processing, ubiquitinated by SCF(BTRC) in response to mTORC1 signal, followed by proteasomal degradation and leading to down-regulate expression of SIRT4. Interaction with EP300/p300 inhibits ubiquitination by SCF(BTRC). Phosphorylation at Ser-245 by RPS6KA3/RSK2 in osteoblasts enhances transactivation activity and promotes osteoblast differentiation. Phosphorylated on the betaTrCP degron motif at Ser-219, followed by phosphorylation at Thr-213, Ser-224, Ser-231, Ser-235 and Ser-248, promoting interaction with BTRC and ubiquitination. Phosphorylation is promoted by mTORC1. Phosphorylation at Ser-215 by CK2 decreases its stability. Phosphorylated by NEK6. Post-translationally, hydroxylated by PHD3, leading to decreased protein stability.

It localises to the nucleus. The protein localises to the nucleus speckle. The protein resides in the cytoplasm. It is found in the cell membrane. Its subcellular location is the cytoskeleton. It localises to the microtubule organizing center. The protein localises to the centrosome. Transcription factor that binds the cAMP response element (CRE) (consensus: 5'-GTGACGT[AC][AG]-3') and displays two biological functions, as regulator of metabolic and redox processes under normal cellular conditions, and as master transcription factor during integrated stress response (ISR). Binds to asymmetric CRE's as a heterodimer and to palindromic CRE's as a homodimer. Core effector of the ISR, which is required for adaptation to various stress such as endoplasmic reticulum (ER) stress, amino acid starvation, mitochondrial stress or oxidative stress. During ISR, ATF4 translation is induced via an alternative ribosome translation re-initiation mechanism in response to EIF2S1/eIF-2-alpha phosphorylation, and stress-induced ATF4 acts as a master transcription factor of stress-responsive genes in order to promote cell recovery. Promotes the transcription of genes linked to amino acid sufficiency and resistance to oxidative stress to protect cells against metabolic consequences of ER oxidation. Activates the transcription of NLRP1, possibly in concert with other factors in response to ER stress. Activates the transcription of asparagine synthetase (ASNS) in response to amino acid deprivation or ER stress. However, when associated with DDIT3/CHOP, the transcriptional activation of the ASNS gene is inhibited in response to amino acid deprivation. Together with DDIT3/CHOP, mediates programmed cell death by promoting the expression of genes involved in cellular amino acid metabolic processes, mRNA translation and the terminal unfolded protein response (terminal UPR), a cellular response that elicits programmed cell death when ER stress is prolonged and unresolved. Activates the expression of COX7A2L/SCAF1 downstream of the EIF2AK3/PERK-mediated unfolded protein response, thereby promoting formation of respiratory chain supercomplexes and increasing mitochondrial oxidative phosphorylation. Together with DDIT3/CHOP, activates the transcription of the IRS-regulator TRIB3 and promotes ER stress-induced neuronal cell death by regulating the expression of BBC3/PUMA in response to ER stress. May cooperate with the UPR transcriptional regulator QRICH1 to regulate ER protein homeostasis which is critical for cell viability in response to ER stress. In the absence of stress, ATF4 translation is at low levels and it is required for normal metabolic processes such as embryonic lens formation, fetal liver hematopoiesis, bone development and synaptic plasticity. Acts as a regulator of osteoblast differentiation in response to phosphorylation by RPS6KA3/RSK2: phosphorylation in osteoblasts enhances transactivation activity and promotes expression of osteoblast-specific genes and post-transcriptionally regulates the synthesis of Type I collagen, the main constituent of the bone matrix. Cooperates with FOXO1 in osteoblasts to regulate glucose homeostasis through suppression of beta-cell production and decrease in insulin production. Activates transcription of SIRT4. Regulates the circadian expression of the core clock component PER2 and the serotonin transporter SLC6A4. Binds in a circadian time-dependent manner to the cAMP response elements (CRE) in the SLC6A4 and PER2 promoters and periodically activates the transcription of these genes. Mainly acts as a transcriptional activator in cellular stress adaptation, but it can also act as a transcriptional repressor: acts as a regulator of synaptic plasticity by repressing transcription, thereby inhibiting induction and maintenance of long-term memory. Regulates synaptic functions via interaction with DISC1 in neurons, which inhibits ATF4 transcription factor activity by disrupting ATF4 dimerization and DNA-binding. In terms of biological role, (Microbial infection) Binds to a Tax-responsive enhancer element in the long terminal repeat of HTLV-I. In Homo sapiens (Human), this protein is Cyclic AMP-dependent transcription factor ATF-4.